An 86-amino-acid chain; its full sequence is Anti-adapter protein IraP (86 aa).

Residues 1 to 38 (MKNLIAELLVKLAQKEEEAKELTVQVEALEIVVTALLR) are a coiled coil.

This sequence belongs to the IraP family. Interacts with RssB.

The protein localises to the cytoplasm. Functionally, inhibits RpoS proteolysis by regulating RssB activity, thereby increasing the stability of the sigma stress factor RpoS especially during phosphate starvation, but also in stationary phase and during nitrogen starvation. Its effect on RpoS stability is due to its interaction with RssB, which probably blocks the interaction of RssB with RpoS, and the consequent delivery of the RssB-RpoS complex to the ClpXP protein degradation pathway. In Klebsiella pneumoniae (strain 342), this protein is Anti-adapter protein IraP.